A 588-amino-acid polypeptide reads, in one-letter code: Calicin (588 aa).

Positions 12-124 (SFVLQNLNRQ…RLRVHCNDFL (113 aa)) constitute a BTB domain. A BACK domain is found at 133 to 235 (CLRYLFLAEL…NAVSNKTLVF (103 aa)). Residue Ser-149 is modified to Phosphoserine. 6 Kelch repeats span residues 280–327 (SVVI…SAGR), 328–375 (YIYI…TCGG), 377–423 (VYSV…TKGD), 425–475 (HLYI…SFQQ), 476–525 (DNIL…IGDS), and 526–580 (KVFV…LAKL).

As to quaternary structure, interacts with CYLC1; the interaction may be relevant for proper acrosome attachment to the nuclear envelope. Expressed in testis, in spermatozoa (at protein level).

The protein resides in the cytoplasm. The protein localises to the cytoskeleton. It localises to the perinuclear theca. Its subcellular location is the calyx. Its function is as follows. Required for both nuclear and acrosomal shaping during spermiogenesis. The sequence is that of Calicin (CCIN) from Homo sapiens (Human).